Reading from the N-terminus, the 546-residue chain is Zinc finger and BTB domain-containing protein 7A (546 aa).

The region spanning 34 to 101 (CDVVILVEGQ…AYTATLTVST (68 aa)) is the BTB domain. The disordered stretch occupies residues 189–288 (QEDEEEPDCN…SFVPTGAEAE (100 aa)). C2H2-type zinc fingers lie at residues 359–381 (QKCP…IRTH), 387–409 (YECN…MRKH), and 415–437 (YLCQ…MRVH). Residues 443–467 (YQCDSCFKTFVRSDHLHRHLKKDGC) form a C2H2-type 4; atypical zinc finger. Positions 463–546 (KKDGCNGIPS…AAEGSAPGPS (84 aa)) are disordered. The span at 534–546 (AGGAAEGSAPGPS) shows a compositional bias: low complexity.

The protein localises to the nucleus. Transcription factor that represses the transcription of a wide range of genes involved in cell proliferation and differentiation. Directly and specifically binds to the consensus sequence 5'-[GA][CA]GACCCCCCCCC-3' and represses transcription both by regulating the organization of chromatin and through the direct recruitment of transcription factors to gene regulatory regions. May also play a role, independently of its transcriptional activity, in double-strand break repair via classical non-homologous end joining/cNHEJ and in alternative splicing. This chain is Zinc finger and BTB domain-containing protein 7A, found in Gallus gallus (Chicken).